A 562-amino-acid chain; its full sequence is Septation ring formation regulator EzrA (562 aa).

The Extracellular segment spans residues 1-2 (ME). A helical membrane pass occupies residues 3 to 21 (FVIGLLIVLLALFAAGYFF). Residues 22-562 (RKKIYAEIDR…VEKIKADISA (541 aa)) lie on the Cytoplasmic side of the membrane. 2 coiled-coil regions span residues 377–425 (YSLL…LKKT) and 470–497 (MEEA…LVEQ).

The protein belongs to the EzrA family. May be degraded by FtsH protease.

Its subcellular location is the cell membrane. The protein resides in the membrane raft. In terms of biological role, negative regulator of FtsZ ring formation; modulates the frequency and position of FtsZ ring formation. Inhibits FtsZ ring formation at polar sites. Interacts either with FtsZ or with one of its binding partners to promote depolymerization. This is Septation ring formation regulator EzrA from Bacillus subtilis (strain 168).